The following is a 64-amino-acid chain: Frontoxin V (64 aa).

5 disulfide bridges follow: Cys3/Cys24, Cys6/Cys11, Cys17/Cys41, Cys45/Cys57, and Cys58/Cys63.

As to expression, expressed by the venom gland.

Its subcellular location is the secreted. In terms of biological role, produces peripheral paralysis by blocking neuromuscular transmission at the postsynaptic site. Binds to the muscular nicotinic acetylcholine receptor (nAChR). In Micrurus frontalis (Coral snake), this protein is Frontoxin V.